Reading from the N-terminus, the 886-residue chain is uncharacterized protein (886 aa).

A signal peptide spans 1 to 20 (MKIIKSLILLVLFMASPAKG). 5 helical membrane passes run 520-540 (VTIFGLMFVLGALKLTAVEVV), 609-629 (LLFIQLLQIHNGLAFIVIITI), 647-667 (VIAFIGLTVMISLAPFFIILM), 680-700 (ISILFSYVVQPTILLIFFLLI), and 779-799 (LLFYSYCLMSYGLVSFVTIVV). The disordered stretch occupies residues 856 to 886 (EARKPQGGGEHTGKFFQNRNDVKPEQTERND). Basic and acidic residues predominate over residues 875–886 (NDVKPEQTERND).

The protein belongs to the TrbL/VirB6 family.

It localises to the cell membrane. This is an uncharacterized protein from Rickettsia bellii (strain RML369-C).